The following is a 319-amino-acid chain: Olfactory receptor 2S2 (319 aa).

Over methionine 1–lysine 26 the chain is Extracellular. The N-linked (GlcNAc...) asparagine glycan is linked to asparagine 5. Residues threonine 27–threonine 50 traverse the membrane as a helical segment. The Cytoplasmic segment spans residues isoleucine 51–threonine 58. A helical membrane pass occupies residues proline 59–proline 80. At leucine 81–glutamine 101 the chain is on the extracellular side. A disulfide bridge connects residues cysteine 98 and cysteine 190. Residues methionine 102–phenylalanine 121 traverse the membrane as a helical segment. Topologically, residues aspartate 122–alanine 140 are cytoplasmic. A helical transmembrane segment spans residues alanine 141–valine 159. Residues histidine 160 to asparagine 196 lie on the Extracellular side of the membrane. The helical transmembrane segment at valine 197 to valine 220 threads the bilayer. Over phenylalanine 221 to lysine 237 the chain is Cytoplasmic. The chain crosses the membrane as a helical span at residues valine 238 to tyrosine 260. Residues glycine 261–lysine 279 lie on the Extracellular side of the membrane. The helical transmembrane segment at leucine 280–leucine 299 threads the bilayer. The Cytoplasmic portion of the chain corresponds to arginine 300–glutamine 319.

This sequence belongs to the G-protein coupled receptor 1 family.

The protein localises to the cell membrane. Its function is as follows. Odorant receptor. The protein is Olfactory receptor 2S2 (OR2S2) of Homo sapiens (Human).